Consider the following 511-residue polypeptide: GMP synthase [glutamine-hydrolyzing] (511 aa).

The region spanning Asp5–Val195 is the Glutamine amidotransferase type-1 domain. Residue Cys82 is the Nucleophile of the active site. Active-site residues include His169 and Glu171. In terms of domain architecture, GMPS ATP-PPase spans Trp196–Arg386. Ser223 to Ser229 lines the ATP pocket.

Homodimer.

The catalysed reaction is XMP + L-glutamine + ATP + H2O = GMP + L-glutamate + AMP + diphosphate + 2 H(+). It participates in purine metabolism; GMP biosynthesis; GMP from XMP (L-Gln route): step 1/1. Functionally, catalyzes the synthesis of GMP from XMP. This chain is GMP synthase [glutamine-hydrolyzing], found in Campylobacter lari (strain RM2100 / D67 / ATCC BAA-1060).